The chain runs to 362 residues: Peptide chain release factor 1 (362 aa).

Gln237 carries the N5-methylglutamine modification.

The protein belongs to the prokaryotic/mitochondrial release factor family. Methylated by PrmC. Methylation increases the termination efficiency of RF1.

The protein resides in the cytoplasm. Its function is as follows. Peptide chain release factor 1 directs the termination of translation in response to the peptide chain termination codons UAG and UAA. This Vibrio vulnificus (strain CMCP6) protein is Peptide chain release factor 1.